A 427-amino-acid chain; its full sequence is UDP-N-acetylglucosamine 1-carboxyvinyltransferase (427 aa).

22 to 23 is a phosphoenolpyruvate binding site; that stretch reads KN. A UDP-N-acetyl-alpha-D-glucosamine-binding site is contributed by R92. D116 acts as the Proton donor in catalysis. UDP-N-acetyl-alpha-D-glucosamine is bound by residues D312 and M334.

It belongs to the EPSP synthase family. MurA subfamily.

Its subcellular location is the cytoplasm. It catalyses the reaction phosphoenolpyruvate + UDP-N-acetyl-alpha-D-glucosamine = UDP-N-acetyl-3-O-(1-carboxyvinyl)-alpha-D-glucosamine + phosphate. Its pathway is cell wall biogenesis; peptidoglycan biosynthesis. Cell wall formation. Adds enolpyruvyl to UDP-N-acetylglucosamine. The sequence is that of UDP-N-acetylglucosamine 1-carboxyvinyltransferase from Borreliella burgdorferi (strain ATCC 35210 / DSM 4680 / CIP 102532 / B31) (Borrelia burgdorferi).